We begin with the raw amino-acid sequence, 525 residues long: Transmembrane protein 184C (525 aa).

7 consecutive transmembrane segments (helical) span residues 17-37 (LLVL…IWKF), 48-68 (SWFI…WGIL), 83-103 (IIRI…ALVY), 121-141 (VIYN…PNLI), 212-232 (YLVI…LLFY), 254-274 (VVFV…LGVI), and 287-307 (AVAT…AAIA). 2 disordered regions span residues 358–394 (PKKK…PSPG) and 483–525 (LFPS…STDP). A compositionally biased stretch (low complexity) spans 373 to 388 (SSLLSSSSQDLTSGSS). Residues 483 to 502 (LFPSTETSENSMIDTSESQQ) show a composition bias toward polar residues. Positions 503-525 (ESSDLCTESSDSSTESSDLSTDP) are enriched in low complexity.

This sequence belongs to the TMEM184 family.

Its subcellular location is the membrane. Possible tumor suppressor which may play a role in cell growth. The chain is Transmembrane protein 184C (Tmem184c) from Mus musculus (Mouse).